Reading from the N-terminus, the 749-residue chain is 5-methyltetrahydropteroyltriglutamate--homocysteine methyltransferase (749 aa).

Residues 15–18 (RELK) and Lys-114 each bind 5-methyltetrahydropteroyltri-L-glutamate. L-homocysteine contacts are provided by residues 425 to 427 (IGS) and Glu-478. L-methionine contacts are provided by residues 425–427 (IGS) and Glu-478. Trp-555 provides a ligand contact to 5-methyltetrahydropteroyltri-L-glutamate. Asp-593 contributes to the L-homocysteine binding site. Residue Asp-593 coordinates L-methionine. Residue Glu-599 participates in 5-methyltetrahydropteroyltri-L-glutamate binding. His-636, Cys-638, and Glu-660 together coordinate Zn(2+). Residue His-689 is the Proton donor of the active site. Residue Cys-721 coordinates Zn(2+).

The protein belongs to the vitamin-B12 independent methionine synthase family. It depends on Zn(2+) as a cofactor.

It catalyses the reaction 5-methyltetrahydropteroyltri-L-glutamate + L-homocysteine = tetrahydropteroyltri-L-glutamate + L-methionine. Its pathway is amino-acid biosynthesis; L-methionine biosynthesis via de novo pathway; L-methionine from L-homocysteine (MetE route): step 1/1. Its function is as follows. Catalyzes the transfer of a methyl group from 5-methyltetrahydrofolate to homocysteine resulting in methionine formation. The polypeptide is 5-methyltetrahydropteroyltriglutamate--homocysteine methyltransferase (Streptococcus pneumoniae serotype 4 (strain ATCC BAA-334 / TIGR4)).